A 149-amino-acid polypeptide reads, in one-letter code: Small ribosomal subunit protein uS13 (149 aa).

Positions 118–149 (GRRHELGLPVRGQRTKSTFRKGSSVGVRRKKR) are disordered.

The protein belongs to the universal ribosomal protein uS13 family. In terms of assembly, part of the 30S ribosomal subunit. Forms a loose heterodimer with protein S19. Forms two bridges to the 50S subunit in the 70S ribosome.

Functionally, located at the top of the head of the 30S subunit, it contacts several helices of the 16S rRNA. In the 70S ribosome it contacts the 23S rRNA (bridge B1a) and protein L5 of the 50S subunit (bridge B1b), connecting the 2 subunits; these bridges are implicated in subunit movement. The protein is Small ribosomal subunit protein uS13 of Methanothermobacter thermautotrophicus (strain ATCC 29096 / DSM 1053 / JCM 10044 / NBRC 100330 / Delta H) (Methanobacterium thermoautotrophicum).